The chain runs to 296 residues: Dof zinc finger protein DOF3.7 (296 aa).

The disordered stretch occupies residues 41 to 69 (NTRPNATASNGGSGGNTNNTATMETRKAR). The segment covering 45 to 62 (NATASNGGSGGNTNNTAT) has biased composition (low complexity). Residues 74-128 (VNCPRCNSTNTKFCYYNNYSLTQPRYFCKGCRRYWTEGGSLRNVPVGGSSRKNKR) form a Dof-type zinc finger. Zn(2+) is bound by residues Cys76, Cys79, Cys101, and Cys104. Positions 115-146 (RNVPVGGSSRKNKRSSTPLASPSNPKLPDLNP) are disordered. Residues 129–138 (SSTPLASPSN) are compositionally biased toward polar residues.

In terms of tissue distribution, expressed in the phloem of the mother plant, including in roots, stem, leaves and flowers, but not present in the seed and embryo. In maturing siliques, found all through the funiculus connecting the placenta to the ovule, but not in the ovule.

It is found in the nucleus. Functionally, transcription factor specifically involved in the maternal control of seed germination. Regulates transcription by binding to a 5'-AA[AG]G-3' consensus core sequence. May ensure the inactivity of a component that would be activated to trigger germination as a consequence of red light perception. The sequence is that of Dof zinc finger protein DOF3.7 (DOF3.7) from Arabidopsis thaliana (Mouse-ear cress).